We begin with the raw amino-acid sequence, 1041 residues long: FHIP family protein GF15501 (1041 aa).

2 disordered regions span residues 797–856 and 907–987; these read RKGN…NKRR and SNSS…SEPV. Serine 803 carries the post-translational modification Phosphoserine. The segment covering 808 to 824 has biased composition (low complexity); sequence NLQQQQALNPAQQQGQQ. 2 stretches are compositionally biased toward polar residues: residues 825-843 and 907-933; these read RSAY…TPTS and SNSS…LSTQ. Over residues 942 to 973 the composition is skewed to low complexity; that stretch reads SGSSSNSSMGGSSQTLSAHSNATTTHSSSTLH.

Belongs to the FHIP family.

In Drosophila ananassae (Fruit fly), this protein is FHIP family protein GF15501.